A 500-amino-acid chain; its full sequence is Pentatricopeptide repeat-containing protein At1g05750, chloroplastic (500 aa).

A chloroplast-targeting transit peptide spans 1–54 (MGLLPVVGITSPALITHKNHANPKIQRHNQSTSETTVSWTSRINLLTRNGRLAE). 10 PPR repeats span residues 35–69 (TTVSWTSRINLLTRNGRLAEAAKEFSDMTLAGVEP), 70–106 (NHITFIALLSGCGDFTSGSEALGDLLHGYACKLGLDR), 108–138 (HVMVGTAIIGMYSKRGRFKKARLVFDYMEDK), 139–173 (NSVTWNTMIDGYMRSGQVDNAAKMFDKMPERDLIS), 174–204 (WTAMINGFVKKGYQEEALLWFREMQISGVKP), 205–239 (DYVAIIAALNACTNLGALSFGLWVHRYVLSQDFKN), 240–270 (NVRVSNSLIDLYCRCGCVEFARQVFYNMEKR), 271–305 (TVVSWNSVIVGFAANGNAHESLVYFRKMQEKGFKP), 306–336 (DAVTFTGALTACSHVGLVEEGLRYFQIMKCD), and 342–376 (RIEHYGCLVDLYSRAGRLEDALKLVQSMPMKPNEV). The tract at residues 377–453 (VIGSLLAACS…QPGFSSIEID (77 aa)) is type E motif. A type E(+) motif region spans residues 454 to 484 (DCMHVFMAGDNAHVETTYIREVLELISSDLR).

This sequence belongs to the PPR family. PCMP-E subfamily.

It is found in the plastid. Its subcellular location is the chloroplast. This chain is Pentatricopeptide repeat-containing protein At1g05750, chloroplastic (PDE247), found in Arabidopsis thaliana (Mouse-ear cress).